Reading from the N-terminus, the 1387-residue chain is DNA-directed RNA polymerase subunit beta (1387 aa).

Belongs to the RNA polymerase beta chain family. In terms of assembly, the RNAP catalytic core consists of 2 alpha, 1 beta, 1 beta' and 1 omega subunit. When a sigma factor is associated with the core the holoenzyme is formed, which can initiate transcription.

It catalyses the reaction RNA(n) + a ribonucleoside 5'-triphosphate = RNA(n+1) + diphosphate. Functionally, DNA-dependent RNA polymerase catalyzes the transcription of DNA into RNA using the four ribonucleoside triphosphates as substrates. The protein is DNA-directed RNA polymerase subunit beta of Xanthomonas campestris pv. campestris (strain 8004).